Consider the following 65-residue polypeptide: Large ribosomal subunit protein bL32 (65 aa).

The segment at 1 to 45 (MAVQQNKKTPSKRGMRRAHDVLKKPTFSVDFSSGETHRRHHVTPD) is disordered.

The protein belongs to the bacterial ribosomal protein bL32 family.

The polypeptide is Large ribosomal subunit protein bL32 (Nitrosococcus oceani (strain ATCC 19707 / BCRC 17464 / JCM 30415 / NCIMB 11848 / C-107)).